The primary structure comprises 257 residues: Protein TONNEAU 1b (257 aa).

The region spanning 73-105 (SGRLLSALICEYLDWAQLNHTLKVYQPECNSAK) is the LisH domain. 2 disordered regions span residues 148–216 (QVMG…EDMP) and 231–257 (LDRKTRNLTSSWRNVKDGTSEEEEGKD). The segment covering 187–199 (SVSASQASGAATS) has biased composition (low complexity). Basic and acidic residues-rich tracts occupy residues 201-212 (YRKDESNWRYDT) and 244-257 (NVKDGTSEEEEGKD).

In terms of assembly, interacts with CEN1, LNG1/TRM2 and LNG2/TRM1 (via C-terminus).

The protein resides in the cytoplasm. It localises to the cytoskeleton. Involved in the control of the dynamic organization of the cortical cytoskeleton. May play a role in the organization of microtubule arrays at the centrosome through interaction with centrin 1 (CEN1). The sequence is that of Protein TONNEAU 1b (TON1B) from Arabidopsis thaliana (Mouse-ear cress).